The primary structure comprises 274 residues: 3-methyl-2-oxobutanoate hydroxymethyltransferase (274 aa).

Aspartate 54 and aspartate 93 together coordinate Mg(2+). 3-methyl-2-oxobutanoate contacts are provided by residues 54–55 (DS), aspartate 93, and lysine 121. Residue glutamate 123 participates in Mg(2+) binding. Glutamate 190 (proton acceptor) is an active-site residue.

It belongs to the PanB family. As to quaternary structure, homodecamer; pentamer of dimers. Requires Mg(2+) as cofactor.

It localises to the cytoplasm. It carries out the reaction 3-methyl-2-oxobutanoate + (6R)-5,10-methylene-5,6,7,8-tetrahydrofolate + H2O = 2-dehydropantoate + (6S)-5,6,7,8-tetrahydrofolate. It participates in cofactor biosynthesis; (R)-pantothenate biosynthesis; (R)-pantoate from 3-methyl-2-oxobutanoate: step 1/2. Its function is as follows. Catalyzes the reversible reaction in which hydroxymethyl group from 5,10-methylenetetrahydrofolate is transferred onto alpha-ketoisovalerate to form ketopantoate. In Ralstonia nicotianae (strain ATCC BAA-1114 / GMI1000) (Ralstonia solanacearum), this protein is 3-methyl-2-oxobutanoate hydroxymethyltransferase.